The following is a 367-amino-acid chain: MSANAFGKLFTVTTFGESHGPAIGCVVDGCPPGLEIAPEEFSHDLQRRASGKSRHTSARREADEIEILSGVYEGRTTGTPIGLLIRNTDQRSKDYSNIAQQFRPGHADYTYWQKYGIRDPRGGGRSSARETTMRVAAGVIAKKWLKQRYGVLVRGFLSQLGEIRPAGFDWDAVEDNPFFWPHAAQVPELETYMDALRKSGDSVGARVDVLAGGVPAGWGEPIYGKLDAELAAALMSINAVKGVEIGDGFASAAQKGTEHRDLITPEGFRSNHAGGILGGISTGQAVTASMVLKPTSSLRLPGATVDADGSVVDVITTGRHDPCVGIRATPIAEAMMALVLMDQALRHRAQCGDVGEISPRIPGQVDV.

Residues 39 to 60 (EEFSHDLQRRASGKSRHTSARR) are disordered. NADP(+) is bound by residues arginine 48 and arginine 54. FMN-binding positions include 125–127 (RSS), 238–239 (NA), glycine 278, 293–297 (KPTSS), and arginine 319.

Belongs to the chorismate synthase family. Homotetramer. FMNH2 serves as cofactor.

It carries out the reaction 5-O-(1-carboxyvinyl)-3-phosphoshikimate = chorismate + phosphate. It functions in the pathway metabolic intermediate biosynthesis; chorismate biosynthesis; chorismate from D-erythrose 4-phosphate and phosphoenolpyruvate: step 7/7. Catalyzes the anti-1,4-elimination of the C-3 phosphate and the C-6 proR hydrogen from 5-enolpyruvylshikimate-3-phosphate (EPSP) to yield chorismate, which is the branch point compound that serves as the starting substrate for the three terminal pathways of aromatic amino acid biosynthesis. This reaction introduces a second double bond into the aromatic ring system. This chain is Chorismate synthase, found in Xanthomonas oryzae pv. oryzae (strain MAFF 311018).